The primary structure comprises 201 residues: Xanthine phosphoribosyltransferase (201 aa).

Residues Leu-20 and Asn-27 each coordinate xanthine. 129-133 is a binding site for 5-phospho-alpha-D-ribose 1-diphosphate; sequence ANGQA. Residue Lys-157 coordinates xanthine.

The protein belongs to the purine/pyrimidine phosphoribosyltransferase family. Xpt subfamily. As to quaternary structure, homodimer.

Its subcellular location is the cytoplasm. The catalysed reaction is XMP + diphosphate = xanthine + 5-phospho-alpha-D-ribose 1-diphosphate. It functions in the pathway purine metabolism; XMP biosynthesis via salvage pathway; XMP from xanthine: step 1/1. Functionally, converts the preformed base xanthine, a product of nucleic acid breakdown, to xanthosine 5'-monophosphate (XMP), so it can be reused for RNA or DNA synthesis. The sequence is that of Xanthine phosphoribosyltransferase from Shouchella clausii (strain KSM-K16) (Alkalihalobacillus clausii).